Here is a 532-residue protein sequence, read N- to C-terminus: MELKAMYLYAAVLAVLLCSSVNFIQSPTDVLGPVALLEPTPSSARDFGAVVSDAPFAVMRPESPDDIALLLGALSSTAPSPRATVAAVGAGHSLHGQAQARDGIVVETRALPRDVHVVSARAHGGDDDATVRAYADVGAGALWVEVLEECLKLGLAPPSWTDYLYLTVGGTLSNGGISGQTFKHGPQISNVLQLEVVTGKGEVVTCSPTEIPELFFAVLGGLGQFGIITRARIPLQLAPPKVRWVRAFYDSFETFTGDQELLVSMPEQVDYVEGFMVLNEQSLHSSSVAFPAQLNFSPDFGSKGRKKVYYCIEFAVHDFQQDSSRADHVVKLVSAKLSYLRPHVYSVEVSYFDFLNRVRMEEESLRSRGLWDVPHPWLNVFVPKHGITQFKGLLMDTVSADDFEGPILVYPLLTDKWDGNTSAVVPAAPDGVMYIFGVLRSTDPARCGRACVDSIMARHRRVADEACRDGGGGGRGIGAKQYLARQPSPARWRDHFGAGWGRFAARKARFDPLHVLGPGQGIFPRTDSAGSM.

An N-terminal signal peptide occupies residues 1–26 (MELKAMYLYAAVLAVLLCSSVNFIQS). The FAD-binding PCMH-type domain maps to 51–238 (VSDAPFAVMR…TRARIPLQLA (188 aa)). FAD-binding residues include alanine 87, glycine 89, and glycine 91. A Pros-8alpha-FAD histidine modification is found at histidine 92. Residues serine 93, glutamine 97, aspartate 162, threonine 167, serine 173, isoleucine 177, and isoleucine 228 each contribute to the FAD site. Residue asparagine 420 is glycosylated (N-linked (GlcNAc...) asparagine). 2 residues coordinate FAD: tyrosine 482 and glutamine 520.

The protein belongs to the oxygen-dependent FAD-linked oxidoreductase family. In terms of assembly, monomer. Requires FAD as cofactor.

Its subcellular location is the secreted. The protein localises to the extracellular space. The catalysed reaction is N(6)-dimethylallyladenine + A + H2O = 3-methyl-2-butenal + adenine + AH2. In terms of biological role, catalyzes the oxidation of cytokinins, a family of N(6)-substituted adenine derivatives that are plant hormones, where the substituent is an isopentenyl group. This Oryza sativa subsp. indica (Rice) protein is Cytokinin dehydrogenase 8 (CKX8).